The chain runs to 418 residues: NADH-quinone oxidoreductase subunit D (418 aa).

This sequence belongs to the complex I 49 kDa subunit family. As to quaternary structure, NDH-1 is composed of 14 different subunits. Subunits NuoB, C, D, E, F, and G constitute the peripheral sector of the complex.

The protein localises to the cell inner membrane. The catalysed reaction is a quinone + NADH + 5 H(+)(in) = a quinol + NAD(+) + 4 H(+)(out). In terms of biological role, NDH-1 shuttles electrons from NADH, via FMN and iron-sulfur (Fe-S) centers, to quinones in the respiratory chain. The immediate electron acceptor for the enzyme in this species is believed to be ubiquinone. Couples the redox reaction to proton translocation (for every two electrons transferred, four hydrogen ions are translocated across the cytoplasmic membrane), and thus conserves the redox energy in a proton gradient. This is NADH-quinone oxidoreductase subunit D from Neisseria meningitidis serogroup A / serotype 4A (strain DSM 15465 / Z2491).